Reading from the N-terminus, the 321-residue chain is Phosphatidate cytidylyltransferase, mitochondrial (321 aa).

It belongs to the TAM41 family. The cofactor is Mg(2+). Requires Co(2+) as cofactor. Cu(2+) serves as cofactor.

The protein localises to the mitochondrion inner membrane. The enzyme catalyses a 1,2-diacyl-sn-glycero-3-phosphate + CTP + H(+) = a CDP-1,2-diacyl-sn-glycerol + diphosphate. It functions in the pathway phospholipid metabolism; CDP-diacylglycerol biosynthesis; CDP-diacylglycerol from sn-glycerol 3-phosphate: step 3/3. Functionally, catalyzes the formation of CDP-diacylglycerol (CDP-DAG) from phosphatidic acid (PA) in the mitochondrial inner membrane. Required for the biosynthesis of the dimeric phospholipid cardiolipin, which stabilizes supercomplexes of the mitochondrial respiratory chain in the mitochondrial inner membrane. The protein is Phosphatidate cytidylyltransferase, mitochondrial of Caenorhabditis elegans.